The sequence spans 607 residues: DNA mismatch repair protein MutL (607 aa).

Belongs to the DNA mismatch repair MutL/HexB family.

In terms of biological role, this protein is involved in the repair of mismatches in DNA. It is required for dam-dependent methyl-directed DNA mismatch repair. May act as a 'molecular matchmaker', a protein that promotes the formation of a stable complex between two or more DNA-binding proteins in an ATP-dependent manner without itself being part of a final effector complex. This Paramagnetospirillum magneticum (strain ATCC 700264 / AMB-1) (Magnetospirillum magneticum) protein is DNA mismatch repair protein MutL.